Reading from the N-terminus, the 319-residue chain is GTPase Era (319 aa).

One can recognise an Era-type G domain in the interval 9–196 (RSGVSLIIGR…MRTLRDLLPE (188 aa)). A G1 region spans residues 17-24 (GRPSSGKS). Residue 17-24 (GRPSSGKS) coordinates GTP. The tract at residues 43–47 (QTTRN) is G2. A G3 region spans residues 64–67 (DTPG). GTP contacts are provided by residues 64–68 (DTPGY) and 127–130 (NKVD). The tract at residues 127 to 130 (NKVD) is G4. Positions 175–177 (ISA) are G5. A KH type-2 domain is found at 227 to 303 (CRDELPHALY…HISLDIRVKV (77 aa)).

Belongs to the TRAFAC class TrmE-Era-EngA-EngB-Septin-like GTPase superfamily. Era GTPase family. In terms of assembly, monomer.

It is found in the cytoplasm. It localises to the cell inner membrane. Functionally, an essential GTPase that binds both GDP and GTP, with rapid nucleotide exchange. Plays a role in 16S rRNA processing and 30S ribosomal subunit biogenesis and possibly also in cell cycle regulation and energy metabolism. The sequence is that of GTPase Era from Treponema pallidum (strain Nichols).